The primary structure comprises 146 residues: Monothiol glutaredoxin-5, mitochondrial (146 aa).

The region spanning 26 to 131 is the Glutaredoxin domain; the sequence is RQALEQAVKE…KILKEINALA (106 aa). K43 serves as a coordination point for glutathione. C51 is a [2Fe-2S] cluster binding site. Glutathione-binding positions include 83–87, I95, and 108–109; these read REGIK and SD.

Belongs to the glutaredoxin family. Monothiol subfamily. In terms of assembly, homodimer. Interacts with ISA1 and ISA2.

It localises to the mitochondrion. Functionally, monothiol glutaredoxin involved in mitochondrial iron-sulfur (Fe/S) cluster transfer. Receives 2Fe/2S clusters from scaffold protein isu1 and mediates their transfer to apoproteins, to the 4Fe/FS cluster biosynthesis machinery, or export from mitochondrion. In Schizosaccharomyces pombe (strain 972 / ATCC 24843) (Fission yeast), this protein is Monothiol glutaredoxin-5, mitochondrial.